We begin with the raw amino-acid sequence, 2335 residues long: uncharacterized protein (2335 aa).

The next 6 membrane-spanning stretches (helical) occupy residues 114–134, 148–167, 172–194, 214–234, 255–275, and 307–327; these read FMIG…AHII, FISG…SIVF, VVIP…IVKY, IFFL…PFLS, EFGF…LSLL, and FVNL…IAYF. Over residues 1043 to 1052 the composition is skewed to polar residues; it reads ATSESISFNQ. The disordered stretch occupies residues 1043–1064; that stretch reads ATSESISFNQTKEKSNSTLGRL. Coiled-coil stretches lie at residues 1174-1202 and 1417-1447; these read VTLK…MKEA and KKRE…EKIV. The span at 1458–1471 shows a compositional bias: polar residues; the sequence is QTSQLTKNSFNPSR. Residues 1458–1479 are disordered; it reads QTSQLTKNSFNPSRQKTDKNLE. Residues 2086-2106 form a helical membrane-spanning segment; it reads VWFPSGSLSQQVLPVHYIYVF. The tract at residues 2200–2222 is disordered; that stretch reads KQEKRILKSKQRRKITDSKQSTE.

The protein belongs to the ycf78 family.

The protein resides in the plastid. It localises to the chloroplast membrane. This is an uncharacterized protein from Tetradesmus obliquus (Green alga).